Reading from the N-terminus, the 227-residue chain is MNESIVISLGGSVISGDPIDADYLQSFAKILASSKFKRIGIVTGGGKTARSYISLLRSLGINENMLDEIGIYATRMNALSLASLLKGANPIIPSTVEEAVNLMSEYRFVVMGGTEPGHTTDTVAALLCERSDTDTLINITSVDGVYDLDPNKYKDARRFDTLGYREAITLSTGSSVGAGPNVFMDITALSIAMRSKIKVIVASRDLNNLKNILEGKPSVFTSIEEKA.

Gly11 to Ser12 is a binding site for ATP. Gly45 is a UMP binding site. 2 residues coordinate ATP: Gly46 and Arg50. UMP-binding positions include Asp67 and Thr114–Thr120. Residues Thr140, Tyr146, and Asp149 each coordinate ATP.

It belongs to the UMP kinase family. In terms of assembly, homohexamer.

It is found in the cytoplasm. The catalysed reaction is UMP + ATP = UDP + ADP. It functions in the pathway pyrimidine metabolism; CTP biosynthesis via de novo pathway; UDP from UMP (UMPK route): step 1/1. Inhibited by UTP. Catalyzes the reversible phosphorylation of UMP to UDP. This chain is Uridylate kinase, found in Thermoplasma volcanium (strain ATCC 51530 / DSM 4299 / JCM 9571 / NBRC 15438 / GSS1).